The following is a 438-amino-acid chain: 3-phosphoshikimate 1-carboxyvinyltransferase (438 aa).

The 3-phosphoshikimate site is built by lysine 21, serine 22, and arginine 26. Residue lysine 21 coordinates phosphoenolpyruvate. Glycine 95 and arginine 123 together coordinate phosphoenolpyruvate. Serine 167, glutamine 169, aspartate 315, and lysine 342 together coordinate 3-phosphoshikimate. Glutamine 169 serves as a coordination point for phosphoenolpyruvate. Aspartate 315 functions as the Proton acceptor in the catalytic mechanism. Phosphoenolpyruvate contacts are provided by arginine 346 and arginine 387.

It belongs to the EPSP synthase family. As to quaternary structure, monomer.

Its subcellular location is the cytoplasm. The enzyme catalyses 3-phosphoshikimate + phosphoenolpyruvate = 5-O-(1-carboxyvinyl)-3-phosphoshikimate + phosphate. The protein operates within metabolic intermediate biosynthesis; chorismate biosynthesis; chorismate from D-erythrose 4-phosphate and phosphoenolpyruvate: step 6/7. Its function is as follows. Catalyzes the transfer of the enolpyruvyl moiety of phosphoenolpyruvate (PEP) to the 5-hydroxyl of shikimate-3-phosphate (S3P) to produce enolpyruvyl shikimate-3-phosphate and inorganic phosphate. The chain is 3-phosphoshikimate 1-carboxyvinyltransferase from Coxiella burnetii (strain CbuG_Q212) (Coxiella burnetii (strain Q212)).